We begin with the raw amino-acid sequence, 221 residues long: Ribonuclease P protein subunit p29 (221 aa).

Serine 10 bears the Phosphoserine mark.

It belongs to the eukaryotic/archaeal RNase P protein component 1 family. As to quaternary structure, component of nuclear RNase P and RNase MRP ribonucleoproteins. RNase P consists of a catalytic RNA moiety and 10 different protein chains; POP1, POP4, POP5, POP7, RPP14, RPP21, RPP25, RPP30, RPP38 and RPP40. Within the RNase P complex, POP1, POP7 and RPP25 form the 'finger' subcomplex, POP5, RPP14, RPP40 and homodimeric RPP30 form the 'palm' subcomplex, and RPP21, POP4 and RPP38 form the 'wrist' subcomplex. All subunits of the RNase P complex interact with the catalytic RNA. Several subunits of RNase P are also part of the RNase MRP complex. RNase MRP consists of a catalytic RNA moiety and about 8 protein subunits; POP1, POP7, RPP25, RPP30, RPP38, RPP40 and possibly also POP4 and POP5.

The protein localises to the nucleus. It is found in the nucleolus. Functionally, component of ribonuclease P, a ribonucleoprotein complex that generates mature tRNA molecules by cleaving their 5'-ends. The protein is Ribonuclease P protein subunit p29 (Pop4) of Rattus norvegicus (Rat).